Reading from the N-terminus, the 355-residue chain is UDP-3-O-acylglucosamine N-acyltransferase (355 aa).

His258 (proton acceptor) is an active-site residue.

It belongs to the transferase hexapeptide repeat family. LpxD subfamily. In terms of assembly, homotrimer.

The catalysed reaction is a UDP-3-O-[(3R)-3-hydroxyacyl]-alpha-D-glucosamine + a (3R)-hydroxyacyl-[ACP] = a UDP-2-N,3-O-bis[(3R)-3-hydroxyacyl]-alpha-D-glucosamine + holo-[ACP] + H(+). It functions in the pathway bacterial outer membrane biogenesis; LPS lipid A biosynthesis. Catalyzes the N-acylation of UDP-3-O-acylglucosamine using 3-hydroxyacyl-ACP as the acyl donor. Is involved in the biosynthesis of lipid A, a phosphorylated glycolipid that anchors the lipopolysaccharide to the outer membrane of the cell. This chain is UDP-3-O-acylglucosamine N-acyltransferase, found in Bradyrhizobium sp. (strain BTAi1 / ATCC BAA-1182).